Consider the following 492-residue polypeptide: Beta-Ala-His dipeptidase (492 aa).

H107 is a Zn(2+) binding site. The active site involves D109. Residue D140 participates in Zn(2+) binding. Residue E174 is the Proton acceptor of the active site. Residue E175 participates in Zn(2+) binding. S194 carries the phosphoserine modification. Zn(2+)-binding residues include D203 and H453.

This sequence belongs to the peptidase M20A family. In terms of assembly, homodimer. Zn(2+) serves as cofactor. As to expression, detected exclusively in kidney.

It localises to the secreted. It catalyses the reaction Preferential hydrolysis of the beta-Ala-|-His dipeptide (carnosine), and also anserine, Xaa-|-His dipeptides and other dipeptides including homocarnosine.. The catalysed reaction is carnosine + H2O = beta-alanine + L-histidine. It carries out the reaction anserine + H2O = N(pros)-methyl-L-histidine + beta-alanine. The enzyme catalyses L-alanyl-L-histidine + H2O = L-histidine + L-alanine. It catalyses the reaction glycyl-L-histidine + H2O = L-histidine + glycine. The catalysed reaction is L-homocarnosine + H2O = 4-aminobutanoate + L-histidine. Its function is as follows. Catalyzes the peptide bond hydrolysis in Xaa-His dipeptides, displaying the highest activity toward carnosine (beta-alanyl-L-histidine) and anserine (beta-alanyl-3-methyl-histidine). This Mus musculus (Mouse) protein is Beta-Ala-His dipeptidase (Cndp1).